We begin with the raw amino-acid sequence, 449 residues long: Hyaluronidase-1 (449 aa).

A signal peptide spans M1–G39. 2 disulfide bridges follow: C58-C348 and C222-C236. Residues N85 and N114 are each glycosylated (N-linked (GlcNAc...) asparagine). E146 functions as the Proton donor in the catalytic mechanism. N231, N252, and N365 each carry an N-linked (GlcNAc...) asparagine glycan. 3 disulfides stabilise this stretch: C373/C384, C378/C433, and C435/C444. Residues C433 to C444 enclose the EGF-like domain.

Belongs to the glycosyl hydrolase 56 family.

Its subcellular location is the secreted. The protein resides in the lysosome. It carries out the reaction Random hydrolysis of (1-&gt;4)-linkages between N-acetyl-beta-D-glucosamine and D-glucuronate residues in hyaluronate.. Functionally, may have a role in promoting tumor progression. May block the TGFB1-enhanced cell growth. Overexpression of HYAL1 suppressed the growth rate of colon carcinoma cell tumors in an experimental model. This is Hyaluronidase-1 (Hyal1) from Rattus norvegicus (Rat).